Reading from the N-terminus, the 129-residue chain is RxLR effector protein SFI6 (129 aa).

The N-terminal stretch at 1–16 (MTLVVLATGLLASGTA) is a signal peptide. The short motif at 42-64 (RFLRSHQITDDKVEINEHGEEER) is the RxLR-dEER element.

It belongs to the RxLR effector family.

The protein localises to the secreted. The protein resides in the host cytoplasm. It localises to the host cell membrane. Effector that suppresses flg22-induced post-translational MAP kinase activation in tomato but not in Arabidopsis. The perception of highly conserved pathogen- or microbe-associated molecular patterns (PAMPs/MAMPs), such as flg22, triggers converging signaling pathways recruiting MAP kinase cascades and inducing transcriptional re-programming, yielding a generic antimicrobial response. The sequence is that of RxLR effector protein SFI6 from Phytophthora infestans (strain T30-4) (Potato late blight agent).